The primary structure comprises 440 residues: Probable aldose 1-epimerase ARB_05372 (440 aa).

A signal peptide spans 1–24 (MCGVLRQLMLLLLAFLSITPSCSA). 5 N-linked (GlcNAc...) asparagine glycosylation sites follow: Asn-32, Asn-38, Asn-43, Asn-68, and Asn-112. A substrate-binding site is contributed by 125–126 (NR). 5 N-linked (GlcNAc...) asparagine glycosylation sites follow: Asn-129, Asn-147, Asn-163, Asn-171, and Asn-199. The active-site Proton donor is the His-233. N-linked (GlcNAc...) asparagine glycans are attached at residues Asn-243, Asn-275, Asn-281, and Asn-306. Asp-311 contacts substrate. N-linked (GlcNAc...) asparagine glycosylation is found at Asn-321, Asn-337, Asn-365, and Asn-385. Catalysis depends on Glu-401, which acts as the Proton acceptor.

Belongs to the aldose epimerase family. Monomer.

The protein localises to the secreted. It carries out the reaction alpha-D-glucose = beta-D-glucose. The protein operates within carbohydrate metabolism; hexose metabolism. In terms of biological role, mutarotase converts alpha-aldose to the beta-anomer. It is active on D-glucose, L-arabinose, D-xylose, D-galactose, maltose and lactose. The polypeptide is Probable aldose 1-epimerase ARB_05372 (Arthroderma benhamiae (strain ATCC MYA-4681 / CBS 112371) (Trichophyton mentagrophytes)).